Reading from the N-terminus, the 63-residue chain is Arabinogalactan protein 22 (63 aa).

The first 27 residues, 1-27, serve as a signal peptide directing secretion; the sequence is MASLKFPLEILAVFVIISVILLPIAQS. Pro32, Pro34, and Pro36 each carry 4-hydroxyproline. O-linked (Ara...) hydroxyproline glycans are attached at residues Pro32, Pro34, and Pro36. Residue Ser38 is the site of GPI-anchor amidated serine attachment. Residues 39-63 constitute a propeptide, removed in mature form; that stretch reads DGTSIDQGIAYVLMMVALALTYFIH.

Belongs to the AG-peptide AGP family. Contains 4-hydroxyproline; hydroxylated on Pro-32, Pro-34 and Pro-36. Post-translationally, O-glycosylated on hydroxyprolines; noncontiguous hydroxylproline residues are glycosylated with arabinogalactan.

Its subcellular location is the cell membrane. In terms of biological role, proteoglycan that seems to be implicated in diverse developmental roles such as differentiation, cell-cell recognition, embryogenesis and programmed cell death. The sequence is that of Arabinogalactan protein 22 from Arabidopsis thaliana (Mouse-ear cress).